We begin with the raw amino-acid sequence, 438 residues long: Putative permease HI_0125 (438 aa).

The next 13 membrane-spanning stretches (helical) occupy residues 21 to 41 (IIAG…VPNM), 51 to 71 (SVFI…GLWA), 73 to 93 (APMA…SLVI), 97 to 117 (VAIP…TLIS), 137 to 157 (AGIG…GLVV), 167 to 187 (LGDF…LIIG), 195 to 215 (GGIL…DPNV), 238 to 258 (FMGA…MTAV), 296 to 316 (LFSG…AAGT), 326 to 346 (AIVV…AFLV), 347 to 367 (PGYA…SNVS), 386 to 406 (FIVL…ALVI), and 418 to 438 (NVGT…GWAI). 315 to 322 (GTAAGGKT) lines the ATP pocket.

It belongs to the nucleobase:cation symporter-2 (NCS2) (TC 2.A.40) family. Azg-like subfamily.

It is found in the cell membrane. The sequence is that of Putative permease HI_0125 from Haemophilus influenzae (strain ATCC 51907 / DSM 11121 / KW20 / Rd).